Consider the following 500-residue polypeptide: Glycerol kinase (500 aa).

Thr12 is an ADP binding site. Positions 12, 13, and 14 each coordinate ATP. Position 12 (Thr12) interacts with sn-glycerol 3-phosphate. Arg16 provides a ligand contact to ADP. Arg82, Glu83, Tyr134, and Asp244 together coordinate sn-glycerol 3-phosphate. Glycerol is bound by residues Arg82, Glu83, Tyr134, Asp244, and Gln245. Residues Thr266 and Gly309 each contribute to the ADP site. Positions 266, 309, 313, and 410 each coordinate ATP. ADP is bound by residues Gly410 and Asn414.

The protein belongs to the FGGY kinase family. In terms of assembly, homotetramer and homodimer (in equilibrium).

The catalysed reaction is glycerol + ATP = sn-glycerol 3-phosphate + ADP + H(+). It participates in polyol metabolism; glycerol degradation via glycerol kinase pathway; sn-glycerol 3-phosphate from glycerol: step 1/1. With respect to regulation, activated by phosphorylation and inhibited by fructose 1,6-bisphosphate (FBP). In terms of biological role, key enzyme in the regulation of glycerol uptake and metabolism. Catalyzes the phosphorylation of glycerol to yield sn-glycerol 3-phosphate. This is Glycerol kinase from Alkaliphilus metalliredigens (strain QYMF).